We begin with the raw amino-acid sequence, 533 residues long: Glycogen synthase (533 aa).

Residue lysine 12 coordinates ADP-alpha-D-glucose. The tract at residues 497-533 (AALARADAASGRRRRAPEQSERLRQERLARQVALASK) is disordered. Residues 512–525 (APEQSERLRQERLA) are compositionally biased toward basic and acidic residues.

The protein belongs to the glycosyltransferase 1 family. Bacterial/plant glycogen synthase subfamily.

It carries out the reaction [(1-&gt;4)-alpha-D-glucosyl](n) + ADP-alpha-D-glucose = [(1-&gt;4)-alpha-D-glucosyl](n+1) + ADP + H(+). The protein operates within glycan biosynthesis; glycogen biosynthesis. Synthesizes alpha-1,4-glucan chains using ADP-glucose. The polypeptide is Glycogen synthase (Burkholderia thailandensis (strain ATCC 700388 / DSM 13276 / CCUG 48851 / CIP 106301 / E264)).